Consider the following 383-residue polypeptide: tRNA-specific 2-thiouridylase MnmA (383 aa).

Residues 16–23 and Leu42 contribute to the ATP site; that span reads AMSGGVDS. The active-site Nucleophile is the Cys110. A disulfide bridge links Cys110 with Cys209. Gly134 is an ATP binding site. The interval 159 to 161 is interaction with tRNA; that stretch reads KDQ. Cys209 serves as the catalytic Cysteine persulfide intermediate.

Belongs to the MnmA/TRMU family.

It localises to the cytoplasm. It catalyses the reaction S-sulfanyl-L-cysteinyl-[protein] + uridine(34) in tRNA + AH2 + ATP = 2-thiouridine(34) in tRNA + L-cysteinyl-[protein] + A + AMP + diphosphate + H(+). Its function is as follows. Catalyzes the 2-thiolation of uridine at the wobble position (U34) of tRNA, leading to the formation of s(2)U34. In Caulobacter vibrioides (strain ATCC 19089 / CIP 103742 / CB 15) (Caulobacter crescentus), this protein is tRNA-specific 2-thiouridylase MnmA.